The primary structure comprises 249 residues: General transcription factor IIF subunit 2 (249 aa).

Alanine 2 carries the N-acetylalanine modification. N6-acetyllysine occurs at positions 22, 33, and 137. Serine 142 carries the phosphoserine modification. 2 residues coordinate DNA: glycine 227 and histidine 229. Serine 248 is subject to Phosphoserine.

The protein belongs to the TFIIF beta subunit family. As to quaternary structure, heterodimer of an alpha and a beta subunit. Interacts with HTATSF1 and GPBP1. Interacts with URI1. Interacts with GTF2B (via N-terminus); this interaction is inhibited in presence of GTF2F1. Part of TBP-based Pol II pre-initiation complex (PIC), in which Pol II core assembles with general transcription factors and other specific initiation factors including GTF2E1, GTF2E2, GTF2F1, GTF2F2, TCEA1, ERCC2, ERCC3, GTF2H2, GTF2H3, GTF2H4, GTF2H5, GTF2A1, GTF2A2, GTF2B and TBP; this large multi-subunit PIC complex mediates DNA unwinding and targets Pol II core to the transcription start site where the first phosphodiester bond forms.

It is found in the nucleus. Functionally, TFIIF is a general transcription initiation factor that binds to RNA polymerase II and helps to recruit it to the initiation complex in collaboration with TFIIB. The sequence is that of General transcription factor IIF subunit 2 (GTF2F2) from Homo sapiens (Human).